We begin with the raw amino-acid sequence, 539 residues long: Copine-C (539 aa).

C2 domains are found at residues 1-120 (MIPS…KIVA) and 128-251 (VTGK…PLIN). L23, D24, D30, D83, D85, and D98 together coordinate Ca(2+). A VWFA domain is found at 290–507 (SLMTAIDCTG…ALAQETLKEI (218 aa)).

Belongs to the copine family. It depends on Ca(2+) as a cofactor.

The chain is Copine-C (cpnC) from Dictyostelium discoideum (Social amoeba).